Consider the following 183-residue polypeptide: Integrase-like protein y4lS (183 aa).

Residues 2–136 (ARIGYARTFT…EGIAAARKRG (135 aa)) form the Resolvase/invertase-type recombinase catalytic domain.

This sequence belongs to the site-specific recombinase resolvase family.

This chain is Integrase-like protein y4lS, found in Sinorhizobium fredii (strain NBRC 101917 / NGR234).